Reading from the N-terminus, the 222-residue chain is Large ribosomal subunit protein uL4 (222 aa).

Residues 50 to 72 (TRGRSEVSHSTRKPFRQKGTGNA) form a disordered region.

It belongs to the universal ribosomal protein uL4 family. As to quaternary structure, part of the 50S ribosomal subunit.

Its function is as follows. One of the primary rRNA binding proteins, this protein initially binds near the 5'-end of the 23S rRNA. It is important during the early stages of 50S assembly. It makes multiple contacts with different domains of the 23S rRNA in the assembled 50S subunit and ribosome. Functionally, forms part of the polypeptide exit tunnel. This chain is Large ribosomal subunit protein uL4, found in Chlamydia muridarum (strain MoPn / Nigg).